Reading from the N-terminus, the 609-residue chain is UvrABC system protein C (609 aa).

The 79-residue stretch at 16 to 94 folds into the GIY-YIG domain; the sequence is SSAGVYRMYD…IKQYMPKYNV (79 aa). One can recognise a UVR domain in the interval 203-238; the sequence is QQVISTLVAKMEQAAQQQEYEQAARFRDQIMALRKV.

This sequence belongs to the UvrC family. Interacts with UvrB in an incision complex.

The protein resides in the cytoplasm. The UvrABC repair system catalyzes the recognition and processing of DNA lesions. UvrC both incises the 5' and 3' sides of the lesion. The N-terminal half is responsible for the 3' incision and the C-terminal half is responsible for the 5' incision. The polypeptide is UvrABC system protein C (Shewanella putrefaciens (strain CN-32 / ATCC BAA-453)).